A 105-amino-acid chain; its full sequence is MNVSFRSNYHQGTIRCSVTAITSRSHRGDRGSTPRFGVSFLFSRKIHMLIHLPLLFHCDATSHILLISIFFLLLFALPQHTMGINSTSCCVHFSSSYNYNVHKLA.

Residues 64-84 (ILLISIFFLLLFALPQHTMGI) traverse the membrane as a helical segment.

It is found in the membrane. This is an uncharacterized protein from Saccharomyces cerevisiae (strain ATCC 204508 / S288c) (Baker's yeast).